Reading from the N-terminus, the 185-residue chain is Threonylcarbamoyl-AMP synthase (185 aa).

The 185-residue stretch at 1–185 folds into the YrdC-like domain; that stretch reads MDNLQQVVSA…AFSDTVLRQG (185 aa).

The protein belongs to the SUA5 family. TsaC subfamily.

Its subcellular location is the cytoplasm. The enzyme catalyses L-threonine + hydrogencarbonate + ATP = L-threonylcarbamoyladenylate + diphosphate + H2O. Its function is as follows. Required for the formation of a threonylcarbamoyl group on adenosine at position 37 (t(6)A37) in tRNAs that read codons beginning with adenine. Catalyzes the conversion of L-threonine, HCO(3)(-)/CO(2) and ATP to give threonylcarbamoyl-AMP (TC-AMP) as the acyladenylate intermediate, with the release of diphosphate. The protein is Threonylcarbamoyl-AMP synthase of Photobacterium profundum (strain SS9).